We begin with the raw amino-acid sequence, 202 residues long: IMP cyclohydrolase (202 aa).

Residues 29–52 (VQRDGTVTVEPTPDAPETDNPYIS) are disordered.

Belongs to the archaeal IMP cyclohydrolase family.

The catalysed reaction is IMP + H2O = 5-formamido-1-(5-phospho-D-ribosyl)imidazole-4-carboxamide. The protein operates within purine metabolism; IMP biosynthesis via de novo pathway; IMP from 5-formamido-1-(5-phospho-D-ribosyl)imidazole-4-carboxamide: step 1/1. Its function is as follows. Catalyzes the cyclization of 5-formylamidoimidazole-4-carboxamide ribonucleotide to IMP. This chain is IMP cyclohydrolase, found in Haloarcula marismortui (strain ATCC 43049 / DSM 3752 / JCM 8966 / VKM B-1809) (Halobacterium marismortui).